Consider the following 344-residue polypeptide: Dihydroorotase (344 aa).

Zn(2+)-binding residues include His13 and His15. Substrate contacts are provided by residues 15–17 and Asn41; that span reads HLR. Positions 99, 136, and 174 each coordinate Zn(2+). Lys99 carries the post-translational modification N6-carboxylysine. His136 is a binding site for substrate. Leu219 is a substrate binding site. Asp247 is a Zn(2+) binding site. Asp247 is an active-site residue. Residues His251 and Ala263 each coordinate substrate.

It belongs to the metallo-dependent hydrolases superfamily. DHOase family. Class II DHOase subfamily. As to quaternary structure, homodimer. Zn(2+) is required as a cofactor.

It catalyses the reaction (S)-dihydroorotate + H2O = N-carbamoyl-L-aspartate + H(+). It functions in the pathway pyrimidine metabolism; UMP biosynthesis via de novo pathway; (S)-dihydroorotate from bicarbonate: step 3/3. Its function is as follows. Catalyzes the reversible cyclization of carbamoyl aspartate to dihydroorotate. The sequence is that of Dihydroorotase from Acinetobacter baumannii (strain SDF).